Consider the following 44-residue polypeptide: Photosystem I reaction center subunit IX 2 (44 aa).

A helical membrane pass occupies residues 13–35 (APVLATLWLSSTAVILIGVNSYF).

It belongs to the PsaJ family.

Its subcellular location is the cellular thylakoid membrane. Functionally, may help in the organization of the PsaE and PsaF subunits. The chain is Photosystem I reaction center subunit IX 2 (psaJ2) from Prochlorococcus marinus (strain NATL2A).